We begin with the raw amino-acid sequence, 284 residues long: Nucleotide-binding protein PputGB1_0956 (284 aa).

8–15 provides a ligand contact to ATP; it reads GRSGSGKS. 60–63 lines the GTP pocket; that stretch reads DARN.

The protein belongs to the RapZ-like family.

Functionally, displays ATPase and GTPase activities. This Pseudomonas putida (strain GB-1) protein is Nucleotide-binding protein PputGB1_0956.